Consider the following 641-residue polypeptide: Sodium-dependent nutrient amino acid transporter 1 (641 aa).

A disordered region spans residues 1–36; that stretch reads MELKGVQPSNGSANGNGTTNAASTEKTDAEKHTPER. Residues 1-38 lie on the Cytoplasmic side of the membrane; sequence MELKGVQPSNGSANGNGTTNAASTEKTDAEKHTPERTN. Residues 9–24 are compositionally biased toward low complexity; it reads SNGSANGNGTTNAAST. Residues 25–35 are compositionally biased toward basic and acidic residues; that stretch reads EKTDAEKHTPE. Transmembrane regions (helical) follow at residues 39 to 59, 72 to 92, and 109 to 129; these read WGNG…LGNV, GAFL…MYYL, and SVVP…ICII. Residues asparagine 183 and asparagine 188 are each glycosylated (N-linked (GlcNAc...) asparagine). Transmembrane regions (helical) follow at residues 229-249, 258-278, 307-327, 341-361, 401-421, 441-461, 474-494, 516-536, and 552-572; these read PDWK…LVIM, AAYF…IRAV, AVVQ…MFAS, IVTT…FAIL, LFSV…IVAL, VALI…TPGG, TYVV…VYGL, CWSF…MVTI, and IAGW…GLWY.

Belongs to the sodium:neurotransmitter symporter (SNF) (TC 2.A.22) family.

Its subcellular location is the membrane. In terms of biological role, unusual broad substrate spectrum amino acid:sodium cotransporter that promotes absorption of the D isomers of essential amino acids. Neutral amino acids are the preferred substrates, especially methionine and phenylalanine. The chain is Sodium-dependent nutrient amino acid transporter 1 from Drosophila erecta (Fruit fly).